A 423-amino-acid polypeptide reads, in one-letter code: UDP-N-acetylglucosamine 1-carboxyvinyltransferase (423 aa).

Residue 22–23 (KN) coordinates phosphoenolpyruvate. Residue arginine 93 coordinates UDP-N-acetyl-alpha-D-glucosamine. The active-site Proton donor is cysteine 117. Cysteine 117 carries the 2-(S-cysteinyl)pyruvic acid O-phosphothioketal modification. UDP-N-acetyl-alpha-D-glucosamine-binding positions include 122–126 (RPVDL), aspartate 308, and valine 330.

Belongs to the EPSP synthase family. MurA subfamily.

Its subcellular location is the cytoplasm. It catalyses the reaction phosphoenolpyruvate + UDP-N-acetyl-alpha-D-glucosamine = UDP-N-acetyl-3-O-(1-carboxyvinyl)-alpha-D-glucosamine + phosphate. Its pathway is cell wall biogenesis; peptidoglycan biosynthesis. Cell wall formation. Adds enolpyruvyl to UDP-N-acetylglucosamine. The sequence is that of UDP-N-acetylglucosamine 1-carboxyvinyltransferase from Finegoldia magna (strain ATCC 29328 / DSM 20472 / WAL 2508) (Peptostreptococcus magnus).